A 188-amino-acid polypeptide reads, in one-letter code: Elongation factor P-like protein (188 aa).

It belongs to the elongation factor P family.

This chain is Elongation factor P-like protein, found in Stenotrophomonas maltophilia (strain R551-3).